A 224-amino-acid chain; its full sequence is MKVTILQFPGTNCEYDAQHAFKSLGAETEILWHKSDTIPSDTDLLIVAGGFSYGDYLRSGAIAKFSPVMKAVIKYADDGGKVLGICNGFQVLTESGLLPGALKRNESLHFLSKHHHLKVINNENIFLEKLDKGDIVNIPIAHHDGNYYIDDSGLKELYANNQVLLKYCDENGNDKNPNGSIDSIAGICNKERNVFGLMPHPERAMEAILGSDDGIKMLQGFLRA.

Positions Lys2 to Ala224 constitute a Glutamine amidotransferase type-1 domain. Cys86 (nucleophile) is an active-site residue. Residues His200 and Glu202 contribute to the active site.

As to quaternary structure, part of the FGAM synthase complex composed of 1 PurL, 1 PurQ and 2 PurS subunits.

It is found in the cytoplasm. The catalysed reaction is N(2)-formyl-N(1)-(5-phospho-beta-D-ribosyl)glycinamide + L-glutamine + ATP + H2O = 2-formamido-N(1)-(5-O-phospho-beta-D-ribosyl)acetamidine + L-glutamate + ADP + phosphate + H(+). The enzyme catalyses L-glutamine + H2O = L-glutamate + NH4(+). It functions in the pathway purine metabolism; IMP biosynthesis via de novo pathway; 5-amino-1-(5-phospho-D-ribosyl)imidazole from N(2)-formyl-N(1)-(5-phospho-D-ribosyl)glycinamide: step 1/2. Part of the phosphoribosylformylglycinamidine synthase complex involved in the purines biosynthetic pathway. Catalyzes the ATP-dependent conversion of formylglycinamide ribonucleotide (FGAR) and glutamine to yield formylglycinamidine ribonucleotide (FGAM) and glutamate. The FGAM synthase complex is composed of three subunits. PurQ produces an ammonia molecule by converting glutamine to glutamate. PurL transfers the ammonia molecule to FGAR to form FGAM in an ATP-dependent manner. PurS interacts with PurQ and PurL and is thought to assist in the transfer of the ammonia molecule from PurQ to PurL. This chain is Phosphoribosylformylglycinamidine synthase subunit PurQ, found in Sulfurimonas denitrificans (strain ATCC 33889 / DSM 1251) (Thiomicrospira denitrificans (strain ATCC 33889 / DSM 1251)).